The chain runs to 302 residues: Haloalkane dehalogenase (302 aa).

Residues 48 to 150 (PVLLMHGEPS…AGLVIANTGL (103 aa)) form the AB hydrolase-1 domain. Residue Asp-123 is the Nucleophile of the active site. The Proton donor role is filled by Asp-249. His-278 acts as the Proton acceptor in catalysis.

Belongs to the haloalkane dehalogenase family. Type 1 subfamily. In terms of assembly, monomer.

The catalysed reaction is 1-haloalkane + H2O = a halide anion + a primary alcohol + H(+). In terms of biological role, catalyzes hydrolytic cleavage of carbon-halogen bonds in halogenated aliphatic compounds, leading to the formation of the corresponding primary alcohols, halide ions and protons. This Caulobacter sp. (strain K31) protein is Haloalkane dehalogenase.